A 216-amino-acid chain; its full sequence is Probable GTP-binding protein EngB (216 aa).

The EngB-type G domain maps to 43 to 216; it reads DRLEVCFAGR…TLRSIITDLT (174 aa). Residues 51-58, 78-82, 96-99, 163-166, and 197-199 each bind GTP; these read GRSNVGKS, GRTQE, DLPG, TKAD, and TSS. The Mg(2+) site is built by S58 and T80.

Belongs to the TRAFAC class TrmE-Era-EngA-EngB-Septin-like GTPase superfamily. EngB GTPase family. Requires Mg(2+) as cofactor.

Its function is as follows. Necessary for normal cell division and for the maintenance of normal septation. The polypeptide is Probable GTP-binding protein EngB (Roseobacter denitrificans (strain ATCC 33942 / OCh 114) (Erythrobacter sp. (strain OCh 114))).